The sequence spans 326 residues: Cytosolic sulfotransferase 7 (326 aa).

72–77 (KSGTTW) contacts 3'-phosphoadenylyl sulfate. The active-site Proton acceptor is the histidine 138. 3'-phosphoadenylyl sulfate contacts are provided by residues arginine 160, serine 168, tyrosine 226, and 292 to 294 (RKG).

This sequence belongs to the sulfotransferase 1 family.

It is found in the cytoplasm. Sulfotransferase that utilizes 3'-phospho-5'-adenylyl sulfate (PAPS) as sulfonate donor. This Arabidopsis thaliana (Mouse-ear cress) protein is Cytosolic sulfotransferase 7 (SOT7).